Here is an 82-residue protein sequence, read N- to C-terminus: Cytotoxin homolog Clbp-3 (82 aa).

An N-terminal signal peptide occupies residues methionine 1 to threonine 21. Disulfide bonds link cysteine 24–cysteine 43, cysteine 36–cysteine 60, cysteine 64–cysteine 75, and cysteine 76–cysteine 81.

Belongs to the three-finger toxin family. Short-chain subfamily. Orphan group XV sub-subfamily. Expressed by the venom gland.

Its subcellular location is the secreted. It localises to the target cell membrane. Has low cytotoxic activity. The protein is Cytotoxin homolog Clbp-3 of Naja atra (Chinese cobra).